A 243-amino-acid chain; its full sequence is Phomoidride biosynthesis cluster protein B (243 aa).

This sequence belongs to the tstB family.

Its function is as follows. Phosphatidylethanolamine-binding protein; part of the gene cluster that mediates the biosynthesis of the antihypercholesterolemic agents phomoidrides which are dimeric anhydrides. Within the pathway, tstB is not essential for dimerization and its function has still to be determined. The pathway begins with the highly reducing polyketide synthase tstA that catalyzes the formation of a C12-fatty acyl-ACP, starting from one acetate and 5 malonate units. The hydrolase tstM is involved in the release of the C12-fatty acyl chain from phiA. The alkylcitrate synthase (ACS) tstJ and the alkylcitrate dehydratase (ACDH) tstI then give rise to decarboxylated monomeric anhydrides by coupling the C12-fatty acyl chain with oxalacetic acid. The cyclase tstC is responsible for the dimerization of the monomeric anhydrides which leads to the production of prephomoidride that contains the characteristic bicyclo[4.3.1]deca-1,6-diene system of phomoidrides. Iterative oxidation catalyzed by the alpha-ketoglutarate-dependent dioxygenase tstK produced then phomoidride A. Finally, the methyltransferase tstE converts phomoidride A to phomoidride B via an acetalization reaction. The phosphatidylethanolamine-binding protein tstB and tstN are not essential for dimerization and their functions have still to be determined. This is Phomoidride biosynthesis cluster protein B from Talaromyces stipitatus (strain ATCC 10500 / CBS 375.48 / QM 6759 / NRRL 1006) (Penicillium stipitatum).